The primary structure comprises 457 residues: Omega-hydroxypalmitate O-feruloyl transferase (457 aa).

Catalysis depends on proton acceptor residues His184 and Asp404.

Belongs to the plant acyltransferase family. As to expression, expressed in roots, seedlings, leaves, stems, flowers and siliques. Detected at the protein level in roots and in seed coats.

The enzyme catalyses 16-hydroxyhexadecanoate + (E)-feruloyl-CoA = 16-feruloyloxyhexadecanoate + CoA. Functionally, involved in the synthesis of aromatics of the suberin polymer. Specifically affects the accumulation of the ferulate constituent of suberin in roots and seeds, but has no effect on the content of p-coumarate or sinapate. The chain is Omega-hydroxypalmitate O-feruloyl transferase (HHT1) from Arabidopsis thaliana (Mouse-ear cress).